We begin with the raw amino-acid sequence, 121 residues long: Large ribosomal subunit protein uL18 (121 aa).

Belongs to the universal ribosomal protein uL18 family. As to quaternary structure, part of the 50S ribosomal subunit; part of the 5S rRNA/L5/L18/L25 subcomplex. Contacts the 5S and 23S rRNAs.

Functionally, this is one of the proteins that bind and probably mediate the attachment of the 5S RNA into the large ribosomal subunit, where it forms part of the central protuberance. This Albidiferax ferrireducens (strain ATCC BAA-621 / DSM 15236 / T118) (Rhodoferax ferrireducens) protein is Large ribosomal subunit protein uL18.